The primary structure comprises 491 residues: Ketol-acid reductoisomerase (NADP(+)) (491 aa).

The KARI N-terminal Rossmann domain occupies 15–208; that stretch reads AQLGKCRFMG…GGHRAGVLES (194 aa). Residues 45–48, R68, R76, S78, and 108–110 each bind NADP(+); these read CGAQ and DKQ. The active site involves H132. NADP(+) is bound at residue G158. KARI C-terminal knotted domains lie at 209–344 and 345–484; these read SFVA…TAPQ and YEGK…MTDM. D217, E221, E389, and E393 together coordinate Mg(2+). Position 414 (S414) interacts with substrate.

Belongs to the ketol-acid reductoisomerase family. Mg(2+) is required as a cofactor.

It catalyses the reaction (2R)-2,3-dihydroxy-3-methylbutanoate + NADP(+) = (2S)-2-acetolactate + NADPH + H(+). It carries out the reaction (2R,3R)-2,3-dihydroxy-3-methylpentanoate + NADP(+) = (S)-2-ethyl-2-hydroxy-3-oxobutanoate + NADPH + H(+). The protein operates within amino-acid biosynthesis; L-isoleucine biosynthesis; L-isoleucine from 2-oxobutanoate: step 2/4. Its pathway is amino-acid biosynthesis; L-valine biosynthesis; L-valine from pyruvate: step 2/4. Functionally, involved in the biosynthesis of branched-chain amino acids (BCAA). Catalyzes an alkyl-migration followed by a ketol-acid reduction of (S)-2-acetolactate (S2AL) to yield (R)-2,3-dihydroxy-isovalerate. In the isomerase reaction, S2AL is rearranged via a Mg-dependent methyl migration to produce 3-hydroxy-3-methyl-2-ketobutyrate (HMKB). In the reductase reaction, this 2-ketoacid undergoes a metal-dependent reduction by NADPH to yield (R)-2,3-dihydroxy-isovalerate. This is Ketol-acid reductoisomerase (NADP(+)) from Salmonella arizonae (strain ATCC BAA-731 / CDC346-86 / RSK2980).